Here is a 468-residue protein sequence, read N- to C-terminus: WD repeat-containing protein 55 homolog (468 aa).

The disordered stretch occupies residues 1-107 (MRNFNSPKFG…VPKRVIDDYD (107 aa)). Composition is skewed to acidic residues over residues 15-26 (DDSDDDDFDSGT), 41-58 (PITEEIEEIEGDDEEYNP), and 67-91 (SDDEDDSDDSDSDKEQENGGEDGED). WD repeat units follow at residues 134–173 (KTEDFVTDLCFHPDQDLLAVGTTTGDVIVYKFTNDECTIV), 178–217 (THTKSVRDVEFNADGDLLISTARDRSIMVTDVETGKLKRF), 221–259 (AHEEPVYTMSMITEHTFATGDDGGVLKLWDLRQKDPVFK), 262–301 (EVEDFISCIITNEQKKYLLMTSGDGYLTTINIPQRKMYVQ), 304–343 (PYEEELTCMGVFRRDSKLVVGSSKGNFYTFNWGQFGYHCD), and 388–427 (QHSLAVETMDINSTGELIASSSHDNDIRFWNIKYFEEFDD).

The protein belongs to the WD repeat WDR55 family.

This chain is WD repeat-containing protein 55 homolog, found in Aedes aegypti (Yellowfever mosquito).